Reading from the N-terminus, the 71-residue chain is uncharacterized protein (71 aa).

Residues Met1–Thr21 form the signal peptide.

This is an uncharacterized protein from Haemophilus influenzae (strain ATCC 51907 / DSM 11121 / KW20 / Rd).